Consider the following 136-residue polypeptide: Aspartate 1-decarboxylase (136 aa).

Residue Ser25 is the Schiff-base intermediate with substrate; via pyruvic acid of the active site. Pyruvic acid (Ser) is present on Ser25. Position 57 (Thr57) interacts with substrate. Catalysis depends on Tyr58, which acts as the Proton donor. Residue 73–75 participates in substrate binding; it reads GAA.

This sequence belongs to the PanD family. Heterooctamer of four alpha and four beta subunits. Pyruvate is required as a cofactor. In terms of processing, is synthesized initially as an inactive proenzyme, which is activated by self-cleavage at a specific serine bond to produce a beta-subunit with a hydroxyl group at its C-terminus and an alpha-subunit with a pyruvoyl group at its N-terminus.

It localises to the cytoplasm. It carries out the reaction L-aspartate + H(+) = beta-alanine + CO2. It functions in the pathway cofactor biosynthesis; (R)-pantothenate biosynthesis; beta-alanine from L-aspartate: step 1/1. Its function is as follows. Catalyzes the pyruvoyl-dependent decarboxylation of aspartate to produce beta-alanine. The protein is Aspartate 1-decarboxylase of Mycolicibacterium smegmatis (strain ATCC 700084 / mc(2)155) (Mycobacterium smegmatis).